Reading from the N-terminus, the 250-residue chain is Lectin 1 (250 aa).

Asparagine 119 carries an N-linked (GlcNAc...) asparagine; partial glycan. Mn(2+) contacts are provided by glutamate 128 and aspartate 130. Ca(2+) contacts are provided by aspartate 130, tyrosine 132, asparagine 138, and aspartate 141. Positions 141 and 146 each coordinate Mn(2+).

This sequence belongs to the leguminous lectin family.

Functionally, di-N-acetylchitobiose specific lectin. The polypeptide is Lectin 1 (Laburnum alpinum (Scotch laburnum)).